We begin with the raw amino-acid sequence, 129 residues long: Transcription antitermination protein NusB (129 aa).

This sequence belongs to the NusB family.

Its function is as follows. Involved in transcription antitermination. Required for transcription of ribosomal RNA (rRNA) genes. Binds specifically to the boxA antiterminator sequence of the ribosomal RNA (rrn) operons. This Staphylococcus aureus (strain USA300 / TCH1516) protein is Transcription antitermination protein NusB.